Consider the following 437-residue polypeptide: Sulfite reductase, dissimilatory-type subunit alpha (437 aa).

C177, C183, C221, C225, C284, C303, C306, and C309 together coordinate [4Fe-4S] cluster. The region spanning 294-322 (SKLSIDNKECVRCMHCINTMPRALHIGDE) is the 4Fe-4S ferredoxin-type domain.

In terms of assembly, heterohexamer of two alpha, two beta and two gamma subunits.

Its function is as follows. Part of the complex that catalyzes the reduction of sulfite to sulfide. The alpha and beta subunits may have arisen by gene duplication. They both bind 2 iron-sulfur clusters, but the alpha subunit seems to be catalytically inactive, due to substitutions along the putative substrate access channel, and because it binds sirohydrochlorin (the dematallated form of siroheme) instead of siroheme. This is Sulfite reductase, dissimilatory-type subunit alpha (dsvA) from Nitratidesulfovibrio vulgaris (strain ATCC 29579 / DSM 644 / CCUG 34227 / NCIMB 8303 / VKM B-1760 / Hildenborough) (Desulfovibrio vulgaris).